Consider the following 428-residue polypeptide: Nuclear hormone receptor family member nhr-44 (428 aa).

Positions 21-98 form a DNA-binding region, nuclear receptor; the sequence is SEKCLVCFQP…LGMKPDNIQR (78 aa). 2 NR C4-type zinc fingers span residues 24 to 44 and 61 to 86; these read CLVCFQPSHGNHFGVDSCRAC and CREGDNKCTPDEWGRWSCKRCRSDKC. Positions 181 to 427 constitute an NR LBD domain; it reads SLEQLAFGLQ…LSHPEMFQFS (247 aa).

It belongs to the nuclear hormone receptor family.

The protein localises to the nucleus. Orphan nuclear receptor. This Caenorhabditis elegans protein is Nuclear hormone receptor family member nhr-44 (nhr-44).